Here is a 130-residue protein sequence, read N- to C-terminus: Small ribosomal subunit protein uS11c (130 aa).

This sequence belongs to the universal ribosomal protein uS11 family. Part of the 30S ribosomal subunit.

The protein localises to the plastid. Its subcellular location is the chloroplast. This chain is Small ribosomal subunit protein uS11c, found in Tetradesmus obliquus (Green alga).